Consider the following 268-residue polypeptide: MALVVKGKVNINEFIDLTKMEKILPSMFTPVKSVMCSKVDKIMVHENESLSEVNLLKGVKLIDSGYVCLAGLVVTGEWNLPDNCRGGVSVCLVDKRMERADEATLGSYYTAAAKKRFQFKVVPNYAITTQDAMKNVWQVLVNIRNVKMSAGFCPLSLEFVSVCIVYRNNIKIGLREKITNVRDGGPMELTEEVVDEFMEDVPMSIRLAKFRSRTGKKSVVPKGNFSSRDRSQPNKNYGNAKDFGGMSFKKNNLIDDGSETSVAESDSF.

Positions 217–268 are disordered; that stretch reads KSVVPKGNFSSRDRSQPNKNYGNAKDFGGMSFKKNNLIDDGSETSVAESDSF. Polar residues predominate over residues 259–268; it reads ETSVAESDSF.

Belongs to the tobamovirus movement protein family. In terms of assembly, binds to host RBCS at the plasmodesmata; this interaction seems required for viral systemic movement. In resistant plants, interacts with host MBP2C at host microtubules; this interaction prevents virus cell to cell movement. In resistant plants, interacts with host resistance (R) protein (e.g. tomato ToMV resistance protein TM-2(2), AC Q71BG9) at the host plasma membrane; this interaction triggers host defense responses leading to programmed cell death.

It is found in the host cytoplasm. The protein resides in the host cytoskeleton. It localises to the host cell junction. The protein localises to the host plasmodesma. Transports viral genome to neighboring plant cells directly through plasmosdesmata, without any budding. The movement protein allows efficient cell to cell propagation, by bypassing the host cell wall barrier. Forms a ribonucleoprotein complex with viral RNA. Binds microtubules and modulates microtubule stability. Can bind double-stranded DNA. Triggers host hypersensitive defense reaction in incompatible plants harboring resistance (R) proteins. The sequence is that of Movement protein (MP) from Allium chinense (Common tobacco).